We begin with the raw amino-acid sequence, 163 residues long: Inorganic pyrophosphatase (163 aa).

Glutamate 9 serves as a coordination point for Mg(2+). Residues lysine 17, arginine 31, and tyrosine 43 each contribute to the substrate site. Mg(2+) is bound by residues aspartate 53, aspartate 58, aspartate 85, and aspartate 90. Aspartate 90 acts as the Proton acceptor in catalysis. Tyrosine 127 serves as a coordination point for substrate.

This sequence belongs to the PPase family. Homohexamer. The cofactor is Mg(2+).

It localises to the cytoplasm. It carries out the reaction diphosphate + H2O = 2 phosphate + H(+). In terms of biological role, catalyzes the hydrolysis of inorganic pyrophosphate (PPi) forming two phosphate ions. This is Inorganic pyrophosphatase from Leifsonia xyli subsp. xyli (strain CTCB07).